The primary structure comprises 194 residues: Large ribosomal subunit protein uL10 (194 aa).

The segment covering 172 to 187 (EGGAAEAPAEAATEAP) has biased composition (low complexity). A disordered region spans residues 172–194 (EGGAAEAPAEAATEAPAEAEAES).

It belongs to the universal ribosomal protein uL10 family. Part of the ribosomal stalk of the 50S ribosomal subunit. The N-terminus interacts with L11 and the large rRNA to form the base of the stalk. The C-terminus forms an elongated spine to which L12 dimers bind in a sequential fashion forming a multimeric L10(L12)X complex.

Forms part of the ribosomal stalk, playing a central role in the interaction of the ribosome with GTP-bound translation factors. This Rhodococcus erythropolis (strain PR4 / NBRC 100887) protein is Large ribosomal subunit protein uL10.